A 411-amino-acid polypeptide reads, in one-letter code: Common plant regulatory factor 1 (411 aa).

A compositionally biased stretch (basic and acidic residues) spans 1 to 14 (MGNTDDVKAVKPEK). Disordered stretches follow at residues 1-30 (MGNTDDVKAVKPEKLSSPPPPAAPDQSNSH), 130-197 (AMSI…SSVI), and 232-293 (SSLE…KQAE). Polar residues predominate over residues 148–164 (TLSQSKETEGSSDGSNE). A compositionally biased stretch (basic and acidic residues) spans 235–244 (ELKDSPKEHA). Polar residues predominate over residues 249-259 (AGGQQPSTMMP). Residues 264-293 (LHNDRDLKRERRKQSNRESARRSRLRKQAE) show a composition bias toward basic and acidic residues. Residues 269–332 (DLKRERRKQS…EKLTNDNSRL (64 aa)) form the bZIP domain. The basic motif stretch occupies residues 271-290 (KRERRKQSNRESARRSRLRK). A leucine-zipper region spans residues 297 to 332 (LAIKVDSLTAENMALKAEINRLTLTAEKLTNDNSRL). Positions 346–411 (DVGLGNNNEK…NPRTDAVAAG (66 aa)) are disordered.

Belongs to the bZIP family. Binds DNA as a dimer.

It localises to the nucleus. Binds to the G-box-like motif (5'-ACGTGGC-3') of the chalcone synthase (CHS) gene promoter. G-box and G-box-like motifs are defined in promoters of certain plant genes which are regulated by such diverse stimuli as light-induction or hormone control. This Petroselinum crispum (Parsley) protein is Common plant regulatory factor 1 (CPRF1).